The primary structure comprises 1133 residues: SH3 and PX domain-containing protein 2A (1133 aa).

Residues 4–128 (YCVQDATVVD…RFFEARPEDV (125 aa)) form the PX domain. Positions 166–225 (MILEQYVVVSNYKKQENSELSLQAGEVVDVIEKNESGWWFVSTSEEQGWVPATYLEAQNG) constitute an SH3 1 domain. Thr-256 is modified (phosphothreonine). Residues 266–325 (SREEKYVTVQPYTSQSKDEIGFEKGVTVEVIRKNLEGWWYIRYLGKEGWAPASYLKKAKD) form the SH3 2 domain. Phosphoserine is present on residues Ser-406 and Ser-421. 4 disordered regions span residues 415 to 446 (QRAQ…PPEP), 505 to 840 (RKKP…EWEG), 899 to 924 (NEQP…GKSD), and 941 to 964 (QSKK…SGTP). The 60-residue stretch at 448–507 (SVEVEYYTIAEFQSCISDGISFRGGQKAEVIDKNSGGWWYVQIGEKEGWAPASYIDKRKK) folds into the SH3 3 domain. The span at 546-555 (DSPRKLKYEE) shows a compositional bias: basic and acidic residues. Phosphoserine is present on residues Ser-547 and Ser-567. Over residues 567–576 (SEPELSEEPV) the composition is skewed to acidic residues. The span at 577–586 (EDRASGERRP) shows a compositional bias: basic and acidic residues. Ser-593 is modified (phosphoserine). Acidic residues predominate over residues 608-620 (SSEDVALEEETIY). Low complexity-rich tracts occupy residues 634-652 (SARG…SLSL), 658-670 (PKSG…SLLK), and 686-715 (SSAS…SKTS). Ser-644 is subject to Phosphoserine. Phosphothreonine is present on Thr-731. Residues Ser-767, Ser-769, and Ser-819 each carry the phosphoserine modification. Residue Thr-829 is modified to Phosphothreonine. The region spanning 840–899 (GPATSYMTCSAYQKVQDSEISFPAGVEVQVLEKQESGWWYVRFGELEGWAPSHYLVLDEN) is the SH3 4 domain. A coiled-coil region spans residues 917-946 (RQNEGKSDSLEKIERRVQALNTVNQSKKAT). Phosphoserine is present on residues Ser-1002, Ser-1016, Ser-1017, and Ser-1038. The interval 1029-1059 (KGRLAERAASQGSDSPLLPAQRNSIPVSPVR) is disordered. An SH3 5 domain is found at 1072–1133 (NLKDVYVSIA…VPSNYLEKKN (62 aa)).

This sequence belongs to the SH3PXD2 family. In terms of assembly, interacts (via N-terminus) with CYBA. Interacts with ADAM12, ADAM15 and ADAM19. Interacts with NOXO1. Interacts (via SH3 domains) with NOXA1. Interacts with FASLG. Interacts (via PX domain) with RAB40B (GTP-bound); interaction promotes invadopodia-mediated extracellular matrix degradation. Post-translationally, tyrosine phosphorylated by SRC. Phosphorylation plays a regulatory role in the protein localization. The intramolecular interaction of the PX domain with the third SH3 domain maintains the protein in the cytoplasm and phosphorylation disrupts this interaction, resulting in the redistribution of the protein from cytoplasm to the perimembrane region. Phosphorylated on serine upon DNA damage, probably by ATM or ATR. As to expression, found in several cancer cell lines, particularly invasive breast carcinomas and melanomas.

The protein localises to the cytoplasm. The protein resides in the cell projection. It is found in the podosome. In terms of biological role, adapter protein involved in invadopodia and podosome formation, extracellular matrix degradation and invasiveness of some cancer cells. Binds matrix metalloproteinases (ADAMs), NADPH oxidases (NOXs) and phosphoinositides. Acts as an organizer protein that allows NOX1- or NOX3-dependent reactive oxygen species (ROS) generation and ROS localization. In association with ADAM12, mediates the neurotoxic effect of amyloid-beta peptide. The chain is SH3 and PX domain-containing protein 2A from Homo sapiens (Human).